We begin with the raw amino-acid sequence, 1227 residues long: Pentatricopeptide repeat-containing protein At5g15280, mitochondrial (1227 aa).

The transit peptide at Met1 to Phe31 directs the protein to the mitochondrion. PPR repeat units lie at residues Leu146–Met180, Asn182–Pro216, Leu217–Leu251, Asn255–Leu289, Asn290–Glu320, Asp322–Gln356, Asp357–Pro391, Asp392–Leu426, Ser427–Glu461, Val527–Leu561, Ser562–Leu597, Asp598–Ile632, Asp633–Pro667, Asp668–Ser698, Gln703–Val737, Glu738–Pro772, Ser773–Ile800, Ser802–Ser836, Tyr837–Cys871, Ser872–Pro906, Gly908–Pro942, Asp943–Pro977, Asn978–Leu1012, Ser1014–Asn1044, Met1047–Pro1081, Gly1082–Pro1116, Ser1117–Pro1151, and Ser1152–Val1186.

It belongs to the PPR family. P subfamily.

It localises to the mitochondrion. The chain is Pentatricopeptide repeat-containing protein At5g15280, mitochondrial from Arabidopsis thaliana (Mouse-ear cress).